Reading from the N-terminus, the 510-residue chain is tRNA-2-methylthio-N(6)-dimethylallyladenosine synthase (510 aa).

In terms of domain architecture, MTTase N-terminal spans 19 to 135; sequence RTFEVRTYGC…LPALLDRARH (117 aa). [4Fe-4S] cluster is bound by residues C28, C64, C98, C172, C176, and C179. The Radical SAM core domain occupies 158-394; that stretch reads RESSYAAWVS…IELQERISLE (237 aa). The 71-residue stretch at 397-467 folds into the TRAM domain; sequence TAQIGRRVEL…PHHLIADAGL (71 aa). The tract at residues 477–510 is disordered; it reads DAHAAGQKPRTGVGLGMPAVGAPDPLPATTGCAR.

This sequence belongs to the methylthiotransferase family. MiaB subfamily. Monomer. [4Fe-4S] cluster is required as a cofactor.

Its subcellular location is the cytoplasm. It carries out the reaction N(6)-dimethylallyladenosine(37) in tRNA + (sulfur carrier)-SH + AH2 + 2 S-adenosyl-L-methionine = 2-methylsulfanyl-N(6)-dimethylallyladenosine(37) in tRNA + (sulfur carrier)-H + 5'-deoxyadenosine + L-methionine + A + S-adenosyl-L-homocysteine + 2 H(+). Its function is as follows. Catalyzes the methylthiolation of N6-(dimethylallyl)adenosine (i(6)A), leading to the formation of 2-methylthio-N6-(dimethylallyl)adenosine (ms(2)i(6)A) at position 37 in tRNAs that read codons beginning with uridine. The sequence is that of tRNA-2-methylthio-N(6)-dimethylallyladenosine synthase from Mycolicibacterium vanbaalenii (strain DSM 7251 / JCM 13017 / BCRC 16820 / KCTC 9966 / NRRL B-24157 / PYR-1) (Mycobacterium vanbaalenii).